Reading from the N-terminus, the 74-residue chain is Putative defensin-like protein 186 (74 aa).

Positions 1-22 (MKNSSIILVLVFFFFISSSGEA) are cleaved as a signal peptide. Intrachain disulfides connect Cys-25-Cys-74, Cys-31-Cys-51, Cys-37-Cys-68, and Cys-41-Cys-70.

Belongs to the DEFL family.

The protein resides in the secreted. This is Putative defensin-like protein 186 (LCR40) from Arabidopsis thaliana (Mouse-ear cress).